A 264-amino-acid polypeptide reads, in one-letter code: Thymidylate synthase (264 aa).

A dUMP-binding site is contributed by R21. Position 51 (H51) interacts with (6R)-5,10-methylene-5,6,7,8-tetrahydrofolate. 126–127 is a binding site for dUMP; that stretch reads RR. The active-site Nucleophile is C146. Residues 166–169, N177, and 207–209 each bind dUMP; these read RSCD and HLY. D169 lines the (6R)-5,10-methylene-5,6,7,8-tetrahydrofolate pocket. A (6R)-5,10-methylene-5,6,7,8-tetrahydrofolate-binding site is contributed by S263.

Belongs to the thymidylate synthase family. Bacterial-type ThyA subfamily. As to quaternary structure, homodimer.

The protein localises to the cytoplasm. It carries out the reaction dUMP + (6R)-5,10-methylene-5,6,7,8-tetrahydrofolate = 7,8-dihydrofolate + dTMP. Its pathway is pyrimidine metabolism; dTTP biosynthesis. Catalyzes the reductive methylation of 2'-deoxyuridine-5'-monophosphate (dUMP) to 2'-deoxythymidine-5'-monophosphate (dTMP) while utilizing 5,10-methylenetetrahydrofolate (mTHF) as the methyl donor and reductant in the reaction, yielding dihydrofolate (DHF) as a by-product. This enzymatic reaction provides an intracellular de novo source of dTMP, an essential precursor for DNA biosynthesis. This is Thymidylate synthase from Buchnera aphidicola subsp. Acyrthosiphon pisum (strain Tuc7).